A 187-amino-acid polypeptide reads, in one-letter code: ECF RNA polymerase sigma factor SigK (187 aa).

The segment at 30-96 is sigma-70 factor domain-2; it reads YDHTCTRVYG…RAVDRVRAEQ (67 aa). The Interaction with polymerase core subunit RpoC motif lies at 53-56; it reads ETTQ. The tract at residues 133-182 is sigma-70 factor domain-4; it reads CLDGLTDTQRQCIELAYYGGLTYAEVSQRLATNLSTIKSRMRDALRGLRN. A DNA-binding region (H-T-H motif) is located at residues 155 to 174; it reads YAEVSQRLATNLSTIKSRMR.

This sequence belongs to the sigma-70 factor family. ECF subfamily. As to quaternary structure, interacts transiently with the RNA polymerase catalytic core formed by RpoA, RpoB, RpoC and RpoZ (2 alpha, 1 beta, 1 beta' and 1 omega subunit) to form the RNA polymerase holoenzyme that can initiate transcription. Interacts (via sigma-70 factor domain 4) with anti-sigma-K factor RskA.

Sigma factors are initiation factors that promote the attachment of RNA polymerase to specific initiation sites and are then released. Extracytoplasmic function (ECF) sigma factors are held in an inactive form by an anti-sigma factor until released by regulated intramembrane proteolysis. In Mycobacterium ulcerans (strain Agy99), this protein is ECF RNA polymerase sigma factor SigK (sigK).